A 336-amino-acid polypeptide reads, in one-letter code: Anthranilate phosphoribosyltransferase (336 aa).

Residues Gly78, 81-82 (GD), Thr86, 88-91 (NVST), 106-114 (KHGNYSVSS), and Ser118 each bind 5-phospho-alpha-D-ribose 1-diphosphate. Gly78 is a binding site for anthranilate. Ser90 is a Mg(2+) binding site. Residue Asn109 participates in anthranilate binding. Arg164 contacts anthranilate. Residues Asp222 and Glu223 each coordinate Mg(2+).

Belongs to the anthranilate phosphoribosyltransferase family. In terms of assembly, homodimer. The cofactor is Mg(2+).

It carries out the reaction N-(5-phospho-beta-D-ribosyl)anthranilate + diphosphate = 5-phospho-alpha-D-ribose 1-diphosphate + anthranilate. Its pathway is amino-acid biosynthesis; L-tryptophan biosynthesis; L-tryptophan from chorismate: step 2/5. Catalyzes the transfer of the phosphoribosyl group of 5-phosphorylribose-1-pyrophosphate (PRPP) to anthranilate to yield N-(5'-phosphoribosyl)-anthranilate (PRA). This chain is Anthranilate phosphoribosyltransferase, found in Halobacterium salinarum (strain ATCC 29341 / DSM 671 / R1).